Reading from the N-terminus, the 2664-residue chain is Inositol 1,4,5-trisphosphate-gated calcium channel ITPR3 (2664 aa).

At 1 to 2227 (MSEMSSFLHI…YVEGASTGVL (2227 aa)) the chain is on the cytoplasmic side. MIR domains lie at 113–173 (GDVV…LRSN), 174–224 (GDNV…INLF), 232–288 (EEVL…VEVV), 295–372 (GGAG…LDPT), and 378–434 (DSFV…IVSV). R266, T268, L269, and R270 together coordinate 1D-myo-inositol 1,4,5-trisphosphate. The segment at 320–344 (NPSYKGDASDPKAAGTGAQGRTGRR) is disordered. 1D-myo-inositol 1,4,5-trisphosphate contacts are provided by R503, K507, R510, Y567, R568, and K569. R743 contacts Ca(2+). Phosphoserine occurs at positions 909 and 927. 2 residues coordinate Ca(2+): E1115 and E1118. 2 disordered regions span residues 1124 to 1158 (KGAS…GEKS) and 1790 to 1850 (QQET…VGER). Polar residues predominate over residues 1792 to 1805 (ETKSTVAVNMSDLG). Phosphoserine occurs at positions 1806, 1825, and 1827. Ca(2+) is bound by residues E1875 and E1939. The ATP site is built by A1989, E2142, and K2145. A helical transmembrane segment spans residues 2228–2248 (GSPLISLLFWILICFSIAALF). Residues 2249-2256 (TKRYSVRP) lie on the Extracellular side of the membrane. Residues 2257 to 2277 (LIVALILRSIYYLGIGPTLNI) form a helical membrane-spanning segment. Residues 2278 to 2286 (LGALNLTNK) lie on the Cytoplasmic side of the membrane. The chain crosses the membrane as a helical span at residues 2287-2304 (IVFVVSFVGNRGTFIRGY). At 2305-2318 (KAMVMDMEFLYHVG) the chain is on the extracellular side. The chain crosses the membrane as a helical span at residues 2319–2339 (YILTSVLGLFAHELFYSILLF). The Cytoplasmic portion of the chain corresponds to 2340 to 2361 (DLIYREETLFNVIKSVTRNGRS). The helical transmembrane segment at 2362–2382 (ILLTALLALILVYLFSIVGFL) threads the bilayer. Residues 2383 to 2489 (FLKDDFILEV…ESLFPARVVY (107 aa)) lie on the Extracellular side of the membrane. C2448 and C2454 are oxidised to a cystine. Residues 2490 to 2510 (DLLFFFIVIIIVLNLIFGVII) form a helical membrane-spanning segment. At 2511–2664 (DTFADLRSEK…FVDVQNCMSR (154 aa)) the chain is on the cytoplasmic side. Residues C2531 and F2532 each contribute to the ATP site. C2531 lines the Zn(2+) pocket. 2 residues coordinate Zn(2+): C2534 and H2551. The ATP site is built by K2553, H2556, N2557, and M2558. Residue H2556 participates in Zn(2+) binding. T2574 contributes to the Ca(2+) binding site. S2602 and S2663 each carry phosphoserine.

Belongs to the InsP3 receptor family. In terms of assembly, homotetramer. Homodimer. Interacts with TRPC1, TRPC3 and TRPC4. Interacts with TRPV4. Interacts with SIGMAR1. Interacts with PML and AKT1. Interacts with IRAG2 (via coiled-coil domain). Interacts with CABP1. Interacts with TMBIM4/LFG4. Interacts with CEMIP. Interacts with TESPA1. Interacts with TMEM203. Interacts with BOK; regulates ITPR3 expression. Interacts with BCL2L10. Interacts with CHGA and CHGB. Post-translationally, phosphorylated by AKT1 on serine and/or threonine residues.

Its subcellular location is the endoplasmic reticulum membrane. The protein resides in the cytoplasmic vesicle. The protein localises to the secretory vesicle membrane. It catalyses the reaction Ca(2+)(in) = Ca(2+)(out). With respect to regulation, inositol 1,4,5-trisphosphate-gated calcium channel is regulated by cytosolic calcium in a biphasic manner. At low concentrations, cytosolic calcium binds at a high-affinity juxtamembrane domain (JD) calcium binding site, allowing ITPR3 to activate by escaping a low-energy resting state through an ensemble of preactivated states. At high cytosolic calcium concentrations, ITPR3 preferentially enters an inhibited state stabilized by calcium binding at a second, low-affinity cytoplasmic domain (CD) calcium binding site. In terms of biological role, inositol 1,4,5-trisphosphate-gated calcium channel that, upon 1D-myo-inositol 1,4,5-trisphosphate binding, transports calcium from the endoplasmic reticulum lumen to cytoplasm, thus releasing the intracellular calcium and therefore participates in cellular calcium ion homeostasis. 1D-myo-inositol 1,4,5-trisphosphate binds to the ligand-free channel without altering its global conformation, yielding the low-energy resting state, then progresses through resting-to preactivated transitions to the higher energy preactivated state, which increases affinity for calcium, promoting binding of the low basal cytosolic calcium at the juxtamembrane domain (JD) site, favoring the transition through the ensemble of high-energy intermediate states along the trajectory to the fully-open activated state. Upon opening, releases calcium in the cytosol where it can bind to the low-affinity cytoplasmic domain (CD) site and stabilizes the inhibited state to terminate calcium release. The chain is Inositol 1,4,5-trisphosphate-gated calcium channel ITPR3 from Bos taurus (Bovine).